Consider the following 135-residue polypeptide: FK506-binding protein 2 (135 aa).

An N-terminal signal peptide occupies residues 1–17 (MLLKSLFLLFLTAIAFA). The region spanning 40-127 (GDLISVHYEG…VFVAELVDIA (88 aa)) is the PPIase FKBP-type domain. The short motif at 132-135 (HDEL) is the Prevents secretion from ER element.

Belongs to the FKBP-type PPIase family. FKBP2 subfamily.

The protein localises to the endoplasmic reticulum. It catalyses the reaction [protein]-peptidylproline (omega=180) = [protein]-peptidylproline (omega=0). Inhibited by both FK506 and rapamycin. Functionally, PPIases accelerate the folding of proteins. It catalyzes the cis-trans isomerization of proline imidic peptide bonds in oligopeptides. This is FK506-binding protein 2 (FPR2) from Debaryomyces hansenii (strain ATCC 36239 / CBS 767 / BCRC 21394 / JCM 1990 / NBRC 0083 / IGC 2968) (Yeast).